Consider the following 263-residue polypeptide: Lens fiber major intrinsic protein (263 aa).

Over 1–9 (MWELRSASF) the chain is Cytoplasmic. The helical transmembrane segment at 10 to 29 (WRAIFAEFFATLFYVFFGLG) threads the bilayer. The Extracellular portion of the chain corresponds to 30-41 (SSLRWAPGPLHV). Residues 42–59 (LQVAMAFGLALATLVQSV) traverse the membrane as a helical segment. The Cytoplasmic portion of the chain corresponds to 60–61 (GH). Residues 62-77 (ISGAHVNPAVTFAFLV) constitute an intramembrane region (discontinuously helical). The NPA 1 motif lies at 68–70 (NPA). At 78–82 (GSQMS) the chain is on the cytoplasmic side. The helical transmembrane segment at 83 to 106 (LLRAFCYMAAQLLGAVAGAAVLYS) threads the bilayer. Over 107-127 (VTPPAVRGNLALNTLHPAVSV) the chain is Extracellular. The helical transmembrane segment at 128 to 148 (GQATTVEIFLTLQFVLCIFAT) threads the bilayer. The Cytoplasmic portion of the chain corresponds to 149-156 (YDERRNGQ). The helical transmembrane segment at 157–175 (LGSVALAVGFSLALGHLFG) threads the bilayer. Residues 176 to 178 (MYY) are Extracellular-facing. The segment at residues 179–193 (TGAGMNPARSFAPAI) is an intramembrane region (discontinuously helical). The NPA 2 motif lies at 184 to 186 (NPA). Residues 194-200 (LTGNFTN) are Extracellular-facing. A helical membrane pass occupies residues 201-222 (HWVYWVGPIIGGGLGSLLYDFL). Over 223–263 (LFPRLKSISERLSVLKGAKPDVSNGQPEVTGEPVELNTQAL) the chain is Cytoplasmic. An interaction with CALM region spans residues 227–237 (LKSISERLSVL). Residues S235 and S245 each carry the phosphoserine modification. N246 and N259 each carry deamidated asparagine; by deterioration.

This sequence belongs to the MIP/aquaporin (TC 1.A.8) family. Homotetramer; each monomer provides an independent water pore. Two homotetramers on opposing membranes can dimerize, forming a cell-cell junction. Interacts with CALM; the calcium-calmodulin/CALM complex interacts with the cytoplasmic domains of two aquaporins, leading to channel closure. Interacts with BFSP1 (via C-terminus); prevents calcium-dependent inhibition of the water channel activity. Post-translationally, subject to partial proteolytic cleavage in the eye lens core. Partial proteolysis promotes interactions between tetramers from adjoining membranes. Fatty acylated at Met-1 and Lys-238. The acyl modifications, in decreasing order of ion abundance, are: oleoyl (C18:1) &gt; palmitoyl (C16:0) &gt; stearoyl (C18:0) &gt; eicosenoyl (C20:1) &gt; dihomo-gamma-linolenoyl (C20:3) &gt; palmitoleoyl (C16:1) &gt; eicosadienoyl (C20:2). As to expression, expressed in the cortex and nucleus of the retina lens (at protein level). Major component of lens fiber gap junctions.

It is found in the cell membrane. The protein resides in the cell junction. It carries out the reaction H2O(in) = H2O(out). With respect to regulation, the water channel activity is inhibited by calcium through calmodulin/CALM. Functionally, aquaporins form homotetrameric transmembrane channels, with each monomer independently mediating water transport across the plasma membrane along its osmotic gradient. Specifically expressed in lens fiber cells, this aquaporin is crucial for maintaining lens water homeostasis and transparency. Beyond water permeability, it also acts as a cell-to-cell adhesion molecule, forming thin junctions between lens fiber cells that are essential for maintaining the ordered structure and transparency of the lens. The polypeptide is Lens fiber major intrinsic protein (Homo sapiens (Human)).